Consider the following 187-residue polypeptide: GTP cyclohydrolase 1 (187 aa).

Zn(2+) contacts are provided by Cys76, His79, and Cys148.

The protein belongs to the GTP cyclohydrolase I family. In terms of assembly, homomer.

The enzyme catalyses GTP + H2O = 7,8-dihydroneopterin 3'-triphosphate + formate + H(+). Its pathway is cofactor biosynthesis; 7,8-dihydroneopterin triphosphate biosynthesis; 7,8-dihydroneopterin triphosphate from GTP: step 1/1. This chain is GTP cyclohydrolase 1, found in Streptococcus gordonii (strain Challis / ATCC 35105 / BCRC 15272 / CH1 / DL1 / V288).